The following is a 190-amino-acid chain: Peptidyl-tRNA hydrolase (190 aa).

Tyr14 is a tRNA binding site. His19 serves as the catalytic Proton acceptor. TRNA-binding residues include Tyr64, Asn66, and Asn112.

It belongs to the PTH family. In terms of assembly, monomer.

The protein localises to the cytoplasm. It carries out the reaction an N-acyl-L-alpha-aminoacyl-tRNA + H2O = an N-acyl-L-amino acid + a tRNA + H(+). In terms of biological role, hydrolyzes ribosome-free peptidyl-tRNAs (with 1 or more amino acids incorporated), which drop off the ribosome during protein synthesis, or as a result of ribosome stalling. Catalyzes the release of premature peptidyl moieties from peptidyl-tRNA molecules trapped in stalled 50S ribosomal subunits, and thus maintains levels of free tRNAs and 50S ribosomes. This Chlorobium luteolum (strain DSM 273 / BCRC 81028 / 2530) (Pelodictyon luteolum) protein is Peptidyl-tRNA hydrolase.